We begin with the raw amino-acid sequence, 316 residues long: Serpentine receptor class gamma-4 (316 aa).

7 consecutive transmembrane segments (helical) span residues 21-41 (FVYLVPGVLFQLRILIVIWGT), 50-70 (SFFTIWSLDSLVSLVQMFLDV), 99-121 (IVYPFYLYAFTAKSVIHSFLSIN), 140-160 (MKKVIVFILLYPFLLLWNVII), 188-208 (FQIISYVFTFSVTLVTNSITL), 229-249 (TAWISSGFVISLIAQAHFAFF), and 258-278 (IFYIIQCVSFDLLNVGSPIVM).

It belongs to the nematode receptor-like protein srg family.

The protein resides in the membrane. The protein is Serpentine receptor class gamma-4 (srg-4) of Caenorhabditis elegans.